A 273-amino-acid chain; its full sequence is Coiled-coil domain-containing protein 122 (273 aa).

Over residues 1-17 (MSDNKERKSQGFPKEDN) the composition is skewed to basic and acidic residues. Positions 1–39 (MSDNKERKSQGFPKEDNQDTSSLADAVEKVAKQQQSQAS) are disordered. Coiled-coil stretches lie at residues 24–116 (ADAV…TAQE) and 179–269 (NRIT…RKCI).

In Homo sapiens (Human), this protein is Coiled-coil domain-containing protein 122 (CCDC122).